The following is a 358-amino-acid chain: Mannonate dehydratase (358 aa).

This sequence belongs to the mannonate dehydratase family. Fe(2+) serves as cofactor. Requires Mn(2+) as cofactor.

It carries out the reaction D-mannonate = 2-dehydro-3-deoxy-D-gluconate + H2O. It participates in carbohydrate metabolism; pentose and glucuronate interconversion. Catalyzes the dehydration of D-mannonate. This is Mannonate dehydratase from Lachnoclostridium phytofermentans (strain ATCC 700394 / DSM 18823 / ISDg) (Clostridium phytofermentans).